We begin with the raw amino-acid sequence, 269 residues long: Zinc transporter ZupT (269 aa).

Helical transmembrane passes span 11-31 (IALA…LLVL), 40-60 (LLAF…LSEI), 80-100 (YGTL…HFIP), 125-145 (ALLT…ATFF), 158-178 (AFAI…PVYF), 187-207 (FSAS…GYWL), 217-237 (FGWV…DELL), and 249-269 (TVYG…LFKW). The Fe(2+) site is built by N136 and E139. Zn(2+) contacts are provided by E139 and H164. N165, E168, and E197 together coordinate Fe(2+). Position 168 (E168) interacts with Zn(2+).

Belongs to the ZIP transporter (TC 2.A.5) family. ZupT subfamily.

The protein resides in the cell inner membrane. The enzyme catalyses Zn(2+)(in) = Zn(2+)(out). In terms of biological role, mediates zinc uptake. May also transport other divalent cations. This Stenotrophomonas maltophilia (strain R551-3) protein is Zinc transporter ZupT.